A 299-amino-acid chain; its full sequence is Taste receptor type 2 member 50 (299 aa).

Residue Met-1 is a topological domain, extracellular. The chain crosses the membrane as a helical span at residues 2 to 22; the sequence is ITFLYIFFSILILVLFVLGNF. Over 23 to 55 the chain is Cytoplasmic; it reads ANGFIALVNFIDWVKRKKISSADQILTALAVSR. A helical transmembrane segment spans residues 56 to 76; that stretch reads IGLLWALLLNWYLTVLNPAFY. Residues 77 to 87 lie on the Extracellular side of the membrane; that stretch reads SVELRITSYNA. A helical transmembrane segment spans residues 88-108; sequence WVVTNHFSMWLAASLSIFYLL. Over 109 to 126 the chain is Cytoplasmic; the sequence is KIANFSNLIFLHLKRRVR. Residues 127 to 147 form a helical membrane-spanning segment; that stretch reads SVILVILLGTLIFLVCHLLVA. At 148-181 the chain is on the extracellular side; sequence NMDESMWAEEYEGNMTGKMKLRNTVHLSYLTVTT. The N-linked (GlcNAc...) asparagine glycan is linked to Asn-161. Residues 182–202 form a helical membrane-spanning segment; the sequence is LWSFIPFTLSLISFLMLICSL. The Cytoplasmic segment spans residues 203–229; that stretch reads CKHLKKMQLHGEGSQDLSTKVHIKALQ. The chain crosses the membrane as a helical span at residues 230-250; sequence TLISFLLLCAIFFLFLIISVW. Residues 251 to 259 lie on the Extracellular side of the membrane; it reads SPRRLQNDP. Residues 260-280 traverse the membrane as a helical segment; sequence VVMVSKAVGNIYLAFDSFILI. The Cytoplasmic portion of the chain corresponds to 281-299; the sequence is WRTKKLKHTFLLILCQIRC.

The protein belongs to the G-protein coupled receptor T2R family.

The protein localises to the membrane. In terms of biological role, receptor that may play a role in the perception of bitterness and is gustducin-linked. May play a role in sensing the chemical composition of the gastrointestinal content. The activity of this receptor may stimulate alpha gustducin, mediate PLC-beta-2 activation and lead to the gating of TRPM5. The sequence is that of Taste receptor type 2 member 50 (TAS2R50) from Gorilla gorilla gorilla (Western lowland gorilla).